Reading from the N-terminus, the 285-residue chain is Steroidogenic acute regulatory protein, mitochondrial (285 aa).

The transit peptide at 1–63 (MLLATFKLCA…RRSSLLGSRL (63 aa)) directs the protein to the mitochondrion. 2 positions are modified to phosphoserine; by PKA: serine 57 and serine 195. The region spanning 67–280 (LYSDQELAYL…LRKRLESHPA (214 aa)) is the START domain.

In terms of assembly, may interact with TSPO. Expressed in gonads, adrenal cortex and kidney.

Its subcellular location is the mitochondrion. The enzyme catalyses cholesterol(in) = cholesterol(out). It participates in steroid metabolism; cholesterol metabolism. Plays a key role in steroid hormone synthesis by enhancing the metabolism of cholesterol into pregnenolone. Mediates the transfer of cholesterol from the outer mitochondrial membrane to the inner mitochondrial membrane where it is cleaved to pregnenolone. This Homo sapiens (Human) protein is Steroidogenic acute regulatory protein, mitochondrial (STAR).